The primary structure comprises 274 residues: NH(3)-dependent NAD(+) synthetase (274 aa).

Gly-46–Ser-53 is an ATP binding site. Mg(2+) is bound at residue Asp-52. Arg-140 lines the deamido-NAD(+) pocket. Thr-160 serves as a coordination point for ATP. Mg(2+) is bound at residue Glu-165. The deamido-NAD(+) site is built by Lys-173 and Asp-180. Lys-189 and Thr-211 together coordinate ATP. His-260–Lys-261 lines the deamido-NAD(+) pocket.

This sequence belongs to the NAD synthetase family. In terms of assembly, homodimer.

The enzyme catalyses deamido-NAD(+) + NH4(+) + ATP = AMP + diphosphate + NAD(+) + H(+). It participates in cofactor biosynthesis; NAD(+) biosynthesis; NAD(+) from deamido-NAD(+) (ammonia route): step 1/1. In terms of biological role, catalyzes the ATP-dependent amidation of deamido-NAD to form NAD. Uses ammonia as a nitrogen source. The chain is NH(3)-dependent NAD(+) synthetase from Streptococcus pneumoniae serotype 19F (strain G54).